The sequence spans 199 residues: Recombination protein RecR (199 aa).

A C4-type zinc finger spans residues 58-73 (CSVCFTLSDTPVCAIC). The region spanning 81-176 (SLLCVVEGPT…TVTRIASGMP (96 aa)) is the Toprim domain.

This sequence belongs to the RecR family.

In terms of biological role, may play a role in DNA repair. It seems to be involved in an RecBC-independent recombinational process of DNA repair. It may act with RecF and RecO. The protein is Recombination protein RecR of Desulfosudis oleivorans (strain DSM 6200 / JCM 39069 / Hxd3) (Desulfococcus oleovorans).